The sequence spans 355 residues: 3-dehydroquinate synthase (355 aa).

NAD(+)-binding positions include 71 to 76 (EGEERK), 105 to 109 (GVVGD), 129 to 130 (TS), Lys142, and Lys151. Residues Glu184, His246, and His263 each coordinate Zn(2+).

It belongs to the sugar phosphate cyclases superfamily. Dehydroquinate synthase family. Co(2+) serves as cofactor. It depends on Zn(2+) as a cofactor. NAD(+) is required as a cofactor.

The protein localises to the cytoplasm. The enzyme catalyses 7-phospho-2-dehydro-3-deoxy-D-arabino-heptonate = 3-dehydroquinate + phosphate. Its pathway is metabolic intermediate biosynthesis; chorismate biosynthesis; chorismate from D-erythrose 4-phosphate and phosphoenolpyruvate: step 2/7. Functionally, catalyzes the conversion of 3-deoxy-D-arabino-heptulosonate 7-phosphate (DAHP) to dehydroquinate (DHQ). This Streptococcus pneumoniae (strain Hungary19A-6) protein is 3-dehydroquinate synthase.